Reading from the N-terminus, the 464-residue chain is MLTKTKSDEIKTQKDSTTGSYWITTFGCQMNKADSERMAGTLEKMGYTRADNELNADLVLYNTCTIRDNAEQKVYSFLGRQAKRKHKTPRLKLVVAGCLAQQEGESLLRRVPELDLVMGPQHVNNLENLLGKVDLGNQVVATEETFISEDITSARRESSICGWVNIIYGCNERCSYCVVPSVRGKEQSRYPNAIKSEIQKLADDNFKEITLLGQNIDAYGRDLPGTTKEGRKENTLTDLLYYIHDVKGIRRIRFATSHPRYFSKRLIQACYELDKVCEHFHIPFQSGNDEILKQMSRGYSIKKYKNIIENIRSLMPDASITADAIVAFPGETEKQYQDTLKLISEIGFDQVNTAAYSARPNTPAAVWTNQLSEEVKKARLQEINDLVEKTARSRNQRYIDNIESVLIEGLNPKNSSQIMGRTRTNRLTFVEIPKNINFNFSLGDEINVRINEARPFSLTGELSL.

Residues 19 to 135 enclose the MTTase N-terminal domain; it reads GSYWITTFGC…LENLLGKVDL (117 aa). [4Fe-4S] cluster-binding residues include Cys-28, Cys-64, Cys-98, Cys-170, Cys-174, and Cys-177. The 239-residue stretch at 156–394 folds into the Radical SAM core domain; the sequence is RESSICGWVN…DLVEKTARSR (239 aa). One can recognise a TRAM domain in the interval 396-464; sequence QRYIDNIESV…PFSLTGELSL (69 aa).

The protein belongs to the methylthiotransferase family. MiaB subfamily. As to quaternary structure, monomer. It depends on [4Fe-4S] cluster as a cofactor.

The protein localises to the cytoplasm. The enzyme catalyses N(6)-dimethylallyladenosine(37) in tRNA + (sulfur carrier)-SH + AH2 + 2 S-adenosyl-L-methionine = 2-methylsulfanyl-N(6)-dimethylallyladenosine(37) in tRNA + (sulfur carrier)-H + 5'-deoxyadenosine + L-methionine + A + S-adenosyl-L-homocysteine + 2 H(+). Functionally, catalyzes the methylthiolation of N6-(dimethylallyl)adenosine (i(6)A), leading to the formation of 2-methylthio-N6-(dimethylallyl)adenosine (ms(2)i(6)A) at position 37 in tRNAs that read codons beginning with uridine. This is tRNA-2-methylthio-N(6)-dimethylallyladenosine synthase from Prochlorococcus marinus (strain MIT 9301).